The chain runs to 164 residues: Succinate dehydrogenase assembly factor 2, mitochondrial (164 aa).

Belongs to the SDHAF2 family. As to quaternary structure, interacts with the flavoprotein subunit within the SDH catalytic dimer.

The protein resides in the mitochondrion matrix. Plays an essential role in the assembly of succinate dehydrogenase (SDH), an enzyme complex (also referred to as respiratory complex II) that is a component of both the tricarboxylic acid (TCA) cycle and the mitochondrial electron transport chain, and which couples the oxidation of succinate to fumarate with the reduction of ubiquinone (coenzyme Q) to ubiquinol. Required for flavinylation (covalent attachment of FAD) of the flavoprotein subunit of the SDH catalytic dimer. This chain is Succinate dehydrogenase assembly factor 2, mitochondrial, found in Lodderomyces elongisporus (strain ATCC 11503 / CBS 2605 / JCM 1781 / NBRC 1676 / NRRL YB-4239) (Yeast).